Here is a 98-residue protein sequence, read N- to C-terminus: NADH-ubiquinone oxidoreductase chain 4L (98 aa).

The next 3 helical transmembrane spans lie at 1 to 21 (MPPI…GMLV), 29 to 49 (SLLC…TMAL), and 61 to 81 (IVLL…LVMV).

It belongs to the complex I subunit 4L family. In terms of assembly, core subunit of respiratory chain NADH dehydrogenase (Complex I) which is composed of 45 different subunits.

It localises to the mitochondrion inner membrane. It catalyses the reaction a ubiquinone + NADH + 5 H(+)(in) = a ubiquinol + NAD(+) + 4 H(+)(out). In terms of biological role, core subunit of the mitochondrial membrane respiratory chain NADH dehydrogenase (Complex I) which catalyzes electron transfer from NADH through the respiratory chain, using ubiquinone as an electron acceptor. Part of the enzyme membrane arm which is embedded in the lipid bilayer and involved in proton translocation. This Orycteropus afer (Aardvark) protein is NADH-ubiquinone oxidoreductase chain 4L (MT-ND4L).